The primary structure comprises 281 residues: NADPH-dependent 7-cyano-7-deazaguanine reductase (281 aa).

Position 88 to 90 (Ile-88 to Ser-90) interacts with substrate. Ser-90 to Lys-91 is an NADPH binding site. The active-site Thioimide intermediate is Cys-189. Asp-196 (proton donor) is an active-site residue. A substrate-binding site is contributed by His-228–Glu-229. Arg-257 to Gly-258 contacts NADPH.

This sequence belongs to the GTP cyclohydrolase I family. QueF type 2 subfamily. Homodimer.

Its subcellular location is the cytoplasm. The enzyme catalyses 7-aminomethyl-7-carbaguanine + 2 NADP(+) = 7-cyano-7-deazaguanine + 2 NADPH + 3 H(+). It functions in the pathway tRNA modification; tRNA-queuosine biosynthesis. Catalyzes the NADPH-dependent reduction of 7-cyano-7-deazaguanine (preQ0) to 7-aminomethyl-7-deazaguanine (preQ1). The chain is NADPH-dependent 7-cyano-7-deazaguanine reductase from Yersinia pestis bv. Antiqua (strain Antiqua).